The sequence spans 232 residues: Flavin-dependent thymidylate synthase (232 aa).

The region spanning 1 to 204 is the ThyX domain; sequence MKIALLQHTP…PTIFRDAGPG (204 aa). Residues Ser55, 79 to 81, and Gln87 each bind FAD; that span reads RHR. DUMP-binding positions include 76–79, 87–91, and Arg143; these read QLVR and QQSQR. Residues 79-89 carry the ThyX motif motif; it reads RHRIASYSQQS. Residues 159–161 and His165 contribute to the FAD site; that span reads NAR. Residue Arg170 coordinates dUMP. Catalysis depends on Arg170, which acts as the Involved in ionization of N3 of dUMP, leading to its activation.

It belongs to the thymidylate synthase ThyX family. In terms of assembly, homotetramer. The cofactor is FAD.

It catalyses the reaction dUMP + (6R)-5,10-methylene-5,6,7,8-tetrahydrofolate + NADPH + H(+) = dTMP + (6S)-5,6,7,8-tetrahydrofolate + NADP(+). It functions in the pathway pyrimidine metabolism; dTTP biosynthesis. Its function is as follows. Catalyzes the reductive methylation of 2'-deoxyuridine-5'-monophosphate (dUMP) to 2'-deoxythymidine-5'-monophosphate (dTMP) while utilizing 5,10-methylenetetrahydrofolate (mTHF) as the methyl donor, and NADPH and FADH(2) as the reductant. The sequence is that of Flavin-dependent thymidylate synthase from Geobacter sulfurreducens (strain ATCC 51573 / DSM 12127 / PCA).